The sequence spans 509 residues: MDEFQRNSNXHRXWQQLFLYPLFFREDLYAIAHDHHLDRSGSSEPTEIFFSHFFSFLTVKRSIRRIRKQNKSISLFGNSDSNKLIEYNKNFSFKSMLEGFTIVLEVSIAMTSKHFIKGMDGWNSLRSIHCIFPFMEDKLPHSNYISDIRVPYSIHPEILVRIFRRWIRDVPSLHLLRLILHEWKNSFSQENLEKVLITQRGNTRFSLFLWNSYVYECESFLIPLIKRFFNPQSLLYGSFPDRTHFEKKIKDIVIFPLQKISPKXIWLLKDSFIHYVRYGERSLIALKGTHLQVKKCRYHLFHFWQYYFHLWFQPYRICSLELSKTSFSFLGFFLNVKMRPLVVRAKMLDDLFITDLITNELNPIAPIRSILFSLAKEKFCDISGWPISKLSWTSLSDDDILDRFDRIWINLFHYYSGSINQDGLYHIKYILLLSCAKTLACKHKSTIRVVREQLGSELFTNSFSKEREFISSSFSKTRSQRERIWNSEISQRNPLXXFWQKMENKQIEN.

The protein belongs to the intron maturase 2 family. MatK subfamily.

The protein localises to the plastid. Its subcellular location is the chloroplast. In terms of biological role, usually encoded in the trnK tRNA gene intron. Probably assists in splicing its own and other chloroplast group II introns. The chain is Maturase K from Thuja occidentalis (Northern white-cedar).